The following is a 957-amino-acid chain: Glycine dehydrogenase (decarboxylating) (957 aa).

Lysine 708 carries the post-translational modification N6-(pyridoxal phosphate)lysine.

Belongs to the GcvP family. The glycine cleavage system is composed of four proteins: P, T, L and H. The cofactor is pyridoxal 5'-phosphate.

The enzyme catalyses N(6)-[(R)-lipoyl]-L-lysyl-[glycine-cleavage complex H protein] + glycine + H(+) = N(6)-[(R)-S(8)-aminomethyldihydrolipoyl]-L-lysyl-[glycine-cleavage complex H protein] + CO2. Functionally, the glycine cleavage system catalyzes the degradation of glycine. The P protein binds the alpha-amino group of glycine through its pyridoxal phosphate cofactor; CO(2) is released and the remaining methylamine moiety is then transferred to the lipoamide cofactor of the H protein. This chain is Glycine dehydrogenase (decarboxylating), found in Escherichia coli O6:H1 (strain CFT073 / ATCC 700928 / UPEC).